A 361-amino-acid polypeptide reads, in one-letter code: Caffeic acid 3-O-methyltransferase 1 (361 aa).

A substrate-binding site is contributed by Met128–Leu134. Residues Ala160–Met178 are substrate binding. 5 residues coordinate S-adenosyl-L-methionine: Gly206, Asp229, Asp249, Met250, and Lys263. The active-site Proton acceptor is His267.

The protein belongs to the class I-like SAM-binding methyltransferase superfamily. Cation-independent O-methyltransferase family. COMT subfamily. As to quaternary structure, homodimer.

The catalysed reaction is (E)-caffeate + S-adenosyl-L-methionine = (E)-ferulate + S-adenosyl-L-homocysteine + H(+). The protein operates within aromatic compound metabolism; phenylpropanoid biosynthesis. Its function is as follows. Catalyzes the conversion of caffeic acid to ferulic acid and of 5-hydroxyferulic acid to sinapic acid. The resulting products may subsequently be converted to the corresponding alcohols that are incorporated into lignins. The polypeptide is Caffeic acid 3-O-methyltransferase 1 (COMT1) (Ocimum basilicum (Sweet basil)).